The primary structure comprises 416 residues: Cysteate synthase (416 aa).

K104 carries the post-translational modification N6-(pyridoxal phosphate)lysine. A pyridoxal 5'-phosphate-binding site is contributed by N130.

Belongs to the threonine synthase family. Cysteate synthase subfamily. Homotrimer. Pyridoxal 5'-phosphate serves as cofactor.

It catalyses the reaction O-phospho-L-serine + sulfite + H(+) = L-cysteate + phosphate. It participates in cofactor biosynthesis; coenzyme M biosynthesis. In terms of biological role, specifically catalyzes the beta-elimination of phosphate from L-phosphoserine and the beta-addition of sulfite to the dehydroalanine intermediate to produce L-cysteate. The protein is Cysteate synthase of Methanosarcina barkeri (strain Fusaro / DSM 804).